The sequence spans 951 residues: Leucine-rich repeat-containing G-protein coupled receptor 4 (951 aa).

Residues 1-24 form the signal peptide; it reads MPGPLRLLCFFALGLLGSAGPSGA. The LRRNT domain occupies 25–57; that stretch reads APPLCAAPCSCDGDRRVDCSGKGLTAVPEGLSA. Residues 25–544 lie on the Extracellular side of the membrane; it reads APPLCAAPCS…LLGSWMIRLT (520 aa). Disulfide bonds link Cys-29–Cys-35 and Cys-33–Cys-43. LRR repeat units lie at residues 58–79, 82–103, 106–127, 130–151, 154–177, 178–199, 202–223, 226–247, 249–270, 273–294, 320–341, 344–365, 366–387, 390–411, and 414–435; these read FTQA…AFKN, FLEE…ALSG, ELKV…AIRG, ALQS…SFEG, QLRH…SNLP, TLQA…AFTN, SLVV…CFDG, NLET…IKAL, SLKE…AFAG, LLRT…AFHN, HLES…LCQN, MLRT…NGCR, ALEE…TFQG, SLRI…AFAK, and TITN…GLNG. Residue Asn-68 is glycosylated (N-linked (GlcNAc...) asparagine). N-linked (GlcNAc...) asparagine glycosylation is found at Asn-188 and Asn-199. N-linked (GlcNAc...) asparagine glycosylation occurs at Asn-294. Cys-339 and Cys-364 form a disulfide bridge. Intrachain disulfides connect Cys-470-Cys-522 and Cys-471-Cys-476. The tract at residues 487–512 is disordered; sequence NSPQDHSVTKEKGATDAANATSTAES. Low complexity predominate over residues 501–510; sequence TDAANATSTA. An N-linked (GlcNAc...) asparagine glycan is attached at Asn-505. A helical transmembrane segment spans residues 545 to 565; the sequence is VWFIFLVALLFNLLVILTVFA. The Cytoplasmic portion of the chain corresponds to 566–575; sequence SCSSLPASKL. The chain crosses the membrane as a helical span at residues 576-596; it reads FIGLISVSNLLMGIYTGILTF. The Extracellular segment spans residues 597–619; sequence LDAVSWGRFAEFGIWWETGSGCK. An intrachain disulfide couples Cys-618 to Cys-693. A helical transmembrane segment spans residues 620 to 640; that stretch reads VAGSLAVFSSESAVFLLTLAA. Residues 641 to 661 are Cytoplasmic-facing; it reads VERSVFAKDVMKNGKSSHLRQ. Residues 662 to 682 traverse the membrane as a helical segment; the sequence is FQVAALVALLGAAIAGCFPLF. The Extracellular portion of the chain corresponds to 683–703; the sequence is HGGQYSASPLCLPFPTGETPS. The helical transmembrane segment at 704–724 threads the bilayer; it reads LGFTVTLVLLNSLAFLLMAII. At 725–756 the chain is on the cytoplasmic side; the sequence is YTKLYCNLEKEDPSENSQSSMIKHVAWLIFTN. The chain crosses the membrane as a helical span at residues 757–777; it reads CIFFCPVAFFSFAPLITAISI. Residues 778 to 783 are Extracellular-facing; the sequence is SPEIMK. Residues 784 to 804 form a helical membrane-spanning segment; the sequence is SVTLIFFPLPACLNPVLYVFF. Residues 805-951 lie on the Cytoplasmic side of the membrane; it reads NPKFKDDWKL…YAYNLPRVRD (147 aa). Ser-920 bears the Phosphoserine mark.

The protein belongs to the G-protein coupled receptor 1 family.

The protein localises to the cell membrane. Receptor for R-spondins that potentiates the canonical Wnt signaling pathway and is involved in the formation of various organs. Upon binding to R-spondins (RSPO1, RSPO2, RSPO3 or RSPO4), associates with phosphorylated LRP6 and frizzled receptors that are activated by extracellular Wnt receptors, triggering the canonical Wnt signaling pathway to increase expression of target genes. In contrast to classical G-protein coupled receptors, does not activate heterotrimeric G-proteins to transduce the signal. Its function as activator of the Wnt signaling pathway is required for the development of various organs, including liver, kidney, intestine, bone, reproductive tract and eye. May also act as a receptor for norrin (NDP), such results however require additional confirmation in vivo. Required during spermatogenesis to activate the Wnt signaling pathway in peritubular myoid cells. Required for the maintenance of intestinal stem cells and Paneth cell differentiation in postnatal intestinal crypts. Acts as a regulator of bone formation and remodeling. Involved in kidney development; required for maintaining the ureteric bud in an undifferentiated state. Involved in the development of the anterior segment of the eye. Required during erythropoiesis. Also acts as a negative regulator of innate immunity by inhibiting TLR2/TLR4 associated pattern-recognition and pro-inflammatory cytokine production. Plays an important role in regulating the circadian rhythms of plasma lipids, partially through regulating the rhythmic expression of MTTP. Required for proper development of GnRH neurons (gonadotropin-releasing hormone expressing neurons) that control the release of reproductive hormones from the pituitary gland. This Mus musculus (Mouse) protein is Leucine-rich repeat-containing G-protein coupled receptor 4 (Lgr4).